The primary structure comprises 350 residues: Uroporphyrinogen decarboxylase (350 aa).

Substrate-binding positions include 28–32 (RQAGR), Phe47, Asp78, Tyr155, Ser210, and His325.

The protein belongs to the uroporphyrinogen decarboxylase family. Homodimer.

The protein resides in the cytoplasm. It carries out the reaction uroporphyrinogen III + 4 H(+) = coproporphyrinogen III + 4 CO2. The protein operates within porphyrin-containing compound metabolism; protoporphyrin-IX biosynthesis; coproporphyrinogen-III from 5-aminolevulinate: step 4/4. In terms of biological role, catalyzes the decarboxylation of four acetate groups of uroporphyrinogen-III to yield coproporphyrinogen-III. The polypeptide is Uroporphyrinogen decarboxylase (Synechocystis sp. (strain ATCC 27184 / PCC 6803 / Kazusa)).